We begin with the raw amino-acid sequence, 60 residues long: Bacteriochlorophyll c-binding protein (60 aa).

N-formylmethionine is present on methionine 1. Histidine 25 contacts a bacteriochlorophyll c.

The protein belongs to the BChl C/E-binding protein family.

It is found in the chlorosome. The protein resides in the chlorosome envelope. Component of the photosynthetic apparatus. The light harvesting B740 complex binds bacteriochlorophyll c. This Pelodictyon luteolum protein is Bacteriochlorophyll c-binding protein (csmA).